The chain runs to 462 residues: Elongation factor 1-alpha (462 aa).

Residue G2 is modified to Blocked amino end (Gly). A tr-type G domain is found at 5-242; it reads KIHINIVVIG…DAILPPSRPT (238 aa). The tract at residues 14–21 is G1; the sequence is GHVDSGKS. GTP is bound at residue 14 to 21; it reads GHVDSGKS. K36 is subject to N6,N6,N6-trimethyllysine. K55 is subject to N6-methyllysine. Residues 70 to 74 form a G2 region; the sequence is GITID. An N6,N6,N6-trimethyllysine modification is found at K79. The G3 stretch occupies residues 91-94; the sequence is DAPG. GTP-binding positions include 91–95 and 153–156; these read DAPGH and NKMD. The segment at 153 to 156 is G4; it reads NKMD. The segment at 194–196 is G5; the sequence is SGW. An N6,N6,N6-trimethyllysine mark is found at K219 and K318. Position 374 is a 5-glutamyl glycerylphosphorylethanolamine (E374).

It belongs to the TRAFAC class translation factor GTPase superfamily. Classic translation factor GTPase family. EF-Tu/EF-1A subfamily. Post-translationally, the N-terminus is blocked.

The protein resides in the cytoplasm. Its function is as follows. This protein promotes the GTP-dependent binding of aminoacyl-tRNA to the A-site of ribosomes during protein biosynthesis. In Artemia salina (Brine shrimp), this protein is Elongation factor 1-alpha.